The primary structure comprises 261 residues: Snake venom serine protease (261 aa).

The N-terminal stretch at 1–20 (MALIGVLANLLILCLSYART) is a signal peptide. Positions 21–24 (APDR) are excised as a propeptide. The Peptidase S1 domain maps to 25–249 (IIGGLECNQN…YIDWIQDIMA (225 aa)). 6 cysteine pairs are disulfide-bonded: C31–C163, C50–C66, C98–C256, C142–C210, C174–C189, and C200–C225. The active-site Charge relay system is H65. N103 carries an N-linked (GlcNAc...) asparagine glycan. D110 (charge relay system) is an active-site residue. N-linked (GlcNAc...) asparagine glycans are attached at residues N117 and N121. Residue S204 is the Charge relay system of the active site.

The protein belongs to the peptidase S1 family. Snake venom subfamily. In terms of assembly, monomer. As to expression, expressed by the venom gland.

It is found in the secreted. Snake venom serine protease that may act in the hemostasis system of the prey. In Philodryas olfersii (Green snake), this protein is Snake venom serine protease.